We begin with the raw amino-acid sequence, 476 residues long: Glutamate--tRNA ligase (476 aa).

Positions 9-19 (PSPTGTLHIGT) match the 'HIGH' region motif. Residues 248 to 252 (KLSKR) carry the 'KMSKS' region motif. ATP is bound at residue lysine 251.

The protein belongs to the class-I aminoacyl-tRNA synthetase family. Glutamate--tRNA ligase type 1 subfamily. As to quaternary structure, monomer.

The protein resides in the cytoplasm. The catalysed reaction is tRNA(Glu) + L-glutamate + ATP = L-glutamyl-tRNA(Glu) + AMP + diphosphate. Functionally, catalyzes the attachment of glutamate to tRNA(Glu) in a two-step reaction: glutamate is first activated by ATP to form Glu-AMP and then transferred to the acceptor end of tRNA(Glu). The sequence is that of Glutamate--tRNA ligase from Synechococcus sp. (strain CC9311).